We begin with the raw amino-acid sequence, 189 residues long: GTP cyclohydrolase 1 (189 aa).

3 residues coordinate Zn(2+): Cys-78, His-81, and Cys-150.

This sequence belongs to the GTP cyclohydrolase I family. In terms of assembly, homomer.

The enzyme catalyses GTP + H2O = 7,8-dihydroneopterin 3'-triphosphate + formate + H(+). The protein operates within cofactor biosynthesis; 7,8-dihydroneopterin triphosphate biosynthesis; 7,8-dihydroneopterin triphosphate from GTP: step 1/1. In Listeria monocytogenes serotype 4a (strain HCC23), this protein is GTP cyclohydrolase 1.